Here is a 223-residue protein sequence, read N- to C-terminus: Translation initiation factor 6 (223 aa).

This sequence belongs to the eIF-6 family.

Its function is as follows. Binds to the 50S ribosomal subunit and prevents its association with the 30S ribosomal subunit to form the 70S initiation complex. This chain is Translation initiation factor 6, found in Sulfurisphaera tokodaii (strain DSM 16993 / JCM 10545 / NBRC 100140 / 7) (Sulfolobus tokodaii).